The chain runs to 348 residues: Phenylalanine--tRNA ligase alpha subunit (348 aa).

Mg(2+) is bound at residue Glu259.

Belongs to the class-II aminoacyl-tRNA synthetase family. Phe-tRNA synthetase alpha subunit type 1 subfamily. Tetramer of two alpha and two beta subunits. The cofactor is Mg(2+).

It localises to the cytoplasm. The enzyme catalyses tRNA(Phe) + L-phenylalanine + ATP = L-phenylalanyl-tRNA(Phe) + AMP + diphosphate + H(+). This is Phenylalanine--tRNA ligase alpha subunit from Latilactobacillus sakei subsp. sakei (strain 23K) (Lactobacillus sakei subsp. sakei).